We begin with the raw amino-acid sequence, 481 residues long: Aspartyl/glutamyl-tRNA(Asn/Gln) amidotransferase subunit B (481 aa).

The protein belongs to the GatB/GatE family. GatB subfamily. As to quaternary structure, heterotrimer of A, B and C subunits.

It carries out the reaction L-glutamyl-tRNA(Gln) + L-glutamine + ATP + H2O = L-glutaminyl-tRNA(Gln) + L-glutamate + ADP + phosphate + H(+). The catalysed reaction is L-aspartyl-tRNA(Asn) + L-glutamine + ATP + H2O = L-asparaginyl-tRNA(Asn) + L-glutamate + ADP + phosphate + 2 H(+). Functionally, allows the formation of correctly charged Asn-tRNA(Asn) or Gln-tRNA(Gln) through the transamidation of misacylated Asp-tRNA(Asn) or Glu-tRNA(Gln) in organisms which lack either or both of asparaginyl-tRNA or glutaminyl-tRNA synthetases. The reaction takes place in the presence of glutamine and ATP through an activated phospho-Asp-tRNA(Asn) or phospho-Glu-tRNA(Gln). The sequence is that of Aspartyl/glutamyl-tRNA(Asn/Gln) amidotransferase subunit B from Prosthecochloris aestuarii (strain DSM 271 / SK 413).